A 406-amino-acid polypeptide reads, in one-letter code: Large ribosomal subunit protein uL4z (406 aa).

The tract at residues 56–95 (PYAVSKKAGHQTSAESWGTGRAVSRIPRVPGGGTHRAGQA) is disordered.

It belongs to the universal ribosomal protein uL4 family.

The protein is Large ribosomal subunit protein uL4z (RPL4A) of Arabidopsis thaliana (Mouse-ear cress).